Consider the following 102-residue polypeptide: ATP-dependent Clp protease adapter protein ClpS (102 aa).

It belongs to the ClpS family. As to quaternary structure, binds to the N-terminal domain of the chaperone ClpA.

Involved in the modulation of the specificity of the ClpAP-mediated ATP-dependent protein degradation. The chain is ATP-dependent Clp protease adapter protein ClpS from Wolinella succinogenes (strain ATCC 29543 / DSM 1740 / CCUG 13145 / JCM 31913 / LMG 7466 / NCTC 11488 / FDC 602W) (Vibrio succinogenes).